The following is a 252-amino-acid chain: Indole-3-glycerol phosphate synthase (252 aa).

The protein belongs to the TrpC family.

It carries out the reaction 1-(2-carboxyphenylamino)-1-deoxy-D-ribulose 5-phosphate + H(+) = (1S,2R)-1-C-(indol-3-yl)glycerol 3-phosphate + CO2 + H2O. It functions in the pathway amino-acid biosynthesis; L-tryptophan biosynthesis; L-tryptophan from chorismate: step 4/5. The protein is Indole-3-glycerol phosphate synthase of Listeria monocytogenes serotype 4a (strain HCC23).